Consider the following 803-residue polypeptide: Leucine--tRNA ligase (803 aa).

Residues 40–51 carry the 'HIGH' region motif; the sequence is PYPSGQGLHVGH. The short motif at 575–579 is the 'KMSKS' region element; it reads KMSKS. Lys578 provides a ligand contact to ATP.

Belongs to the class-I aminoacyl-tRNA synthetase family.

The protein localises to the cytoplasm. It catalyses the reaction tRNA(Leu) + L-leucine + ATP = L-leucyl-tRNA(Leu) + AMP + diphosphate. The chain is Leucine--tRNA ligase from Lacticaseibacillus paracasei (strain ATCC 334 / BCRC 17002 / CCUG 31169 / CIP 107868 / KCTC 3260 / NRRL B-441) (Lactobacillus paracasei).